Here is a 264-residue protein sequence, read N- to C-terminus: Hydroxyethylthiazole kinase (264 aa).

A substrate-binding site is contributed by methionine 40. Lysine 116 and threonine 161 together coordinate ATP. A substrate-binding site is contributed by glycine 188.

It belongs to the Thz kinase family. The cofactor is Mg(2+).

It catalyses the reaction 5-(2-hydroxyethyl)-4-methylthiazole + ATP = 4-methyl-5-(2-phosphooxyethyl)-thiazole + ADP + H(+). The protein operates within cofactor biosynthesis; thiamine diphosphate biosynthesis; 4-methyl-5-(2-phosphoethyl)-thiazole from 5-(2-hydroxyethyl)-4-methylthiazole: step 1/1. Its function is as follows. Catalyzes the phosphorylation of the hydroxyl group of 4-methyl-5-beta-hydroxyethylthiazole (THZ). The protein is Hydroxyethylthiazole kinase of Staphylococcus carnosus (strain TM300).